The sequence spans 385 residues: Succinate--CoA ligase [ADP-forming] subunit beta (385 aa).

In terms of domain architecture, ATP-grasp spans 9-244; sequence KALFRTFGVP…LDEEDPLEVE (236 aa). ATP-binding positions include lysine 46, 53 to 55, glutamate 99, glutamine 102, and glutamate 107; that span reads GRG. The Mg(2+) site is built by asparagine 199 and aspartate 213. Substrate is bound by residues asparagine 264 and 321 to 323; that span reads GIL.

This sequence belongs to the succinate/malate CoA ligase beta subunit family. In terms of assembly, heterotetramer of two alpha and two beta subunits. Mg(2+) serves as cofactor.

The catalysed reaction is succinate + ATP + CoA = succinyl-CoA + ADP + phosphate. It carries out the reaction GTP + succinate + CoA = succinyl-CoA + GDP + phosphate. It participates in carbohydrate metabolism; tricarboxylic acid cycle; succinate from succinyl-CoA (ligase route): step 1/1. Its function is as follows. Succinyl-CoA synthetase functions in the citric acid cycle (TCA), coupling the hydrolysis of succinyl-CoA to the synthesis of either ATP or GTP and thus represents the only step of substrate-level phosphorylation in the TCA. The beta subunit provides nucleotide specificity of the enzyme and binds the substrate succinate, while the binding sites for coenzyme A and phosphate are found in the alpha subunit. The protein is Succinate--CoA ligase [ADP-forming] subunit beta of Desulforapulum autotrophicum (strain ATCC 43914 / DSM 3382 / VKM B-1955 / HRM2) (Desulfobacterium autotrophicum).